Reading from the N-terminus, the 377-residue chain is F-box protein At1g11810 (377 aa).

One can recognise an F-box domain in the interval T2–A48.

In Arabidopsis thaliana (Mouse-ear cress), this protein is F-box protein At1g11810.